The primary structure comprises 187 residues: Large ribosomal subunit protein bL9 (187 aa).

The disordered stretch occupies residues 155–187 (AQRGGMVTGLREEDEEEEVEETATEEGGEETAA). Acidic residues predominate over residues 166-187 (EEDEEEEVEETATEEGGEETAA).

Belongs to the bacterial ribosomal protein bL9 family.

Binds to the 23S rRNA. The sequence is that of Large ribosomal subunit protein bL9 from Rhodospirillum centenum (strain ATCC 51521 / SW).